Consider the following 517-residue polypeptide: Bifunctional purine biosynthesis protein PurH (517 aa).

An MGS-like domain is found at 1-146 (MAPIALLSVS…KNHAHVAVLT (146 aa)).

It belongs to the PurH family.

It catalyses the reaction (6R)-10-formyltetrahydrofolate + 5-amino-1-(5-phospho-beta-D-ribosyl)imidazole-4-carboxamide = 5-formamido-1-(5-phospho-D-ribosyl)imidazole-4-carboxamide + (6S)-5,6,7,8-tetrahydrofolate. The enzyme catalyses IMP + H2O = 5-formamido-1-(5-phospho-D-ribosyl)imidazole-4-carboxamide. Its pathway is purine metabolism; IMP biosynthesis via de novo pathway; 5-formamido-1-(5-phospho-D-ribosyl)imidazole-4-carboxamide from 5-amino-1-(5-phospho-D-ribosyl)imidazole-4-carboxamide (10-formyl THF route): step 1/1. It functions in the pathway purine metabolism; IMP biosynthesis via de novo pathway; IMP from 5-formamido-1-(5-phospho-D-ribosyl)imidazole-4-carboxamide: step 1/1. This is Bifunctional purine biosynthesis protein PurH from Prochlorococcus marinus (strain MIT 9313).